We begin with the raw amino-acid sequence, 228 residues long: 7-cyano-7-deazaguanine synthase (228 aa).

7 to 17 (LSGGLDSAVNL) is an ATP binding site. Zn(2+) is bound by residues Cys-192, Cys-200, Cys-203, and Cys-206.

This sequence belongs to the QueC family. As to quaternary structure, homodimer. Zn(2+) is required as a cofactor.

The enzyme catalyses 7-carboxy-7-deazaguanine + NH4(+) + ATP = 7-cyano-7-deazaguanine + ADP + phosphate + H2O + H(+). Its pathway is purine metabolism; 7-cyano-7-deazaguanine biosynthesis. Catalyzes the ATP-dependent conversion of 7-carboxy-7-deazaguanine (CDG) to 7-cyano-7-deazaguanine (preQ(0)). This chain is 7-cyano-7-deazaguanine synthase, found in Desulforamulus reducens (strain ATCC BAA-1160 / DSM 100696 / MI-1) (Desulfotomaculum reducens).